We begin with the raw amino-acid sequence, 204 residues long: ATP phosphoribosyltransferase (204 aa).

This sequence belongs to the ATP phosphoribosyltransferase family. Short subfamily. As to quaternary structure, heteromultimer composed of HisG and HisZ subunits.

It localises to the cytoplasm. It carries out the reaction 1-(5-phospho-beta-D-ribosyl)-ATP + diphosphate = 5-phospho-alpha-D-ribose 1-diphosphate + ATP. Its pathway is amino-acid biosynthesis; L-histidine biosynthesis; L-histidine from 5-phospho-alpha-D-ribose 1-diphosphate: step 1/9. Functionally, catalyzes the condensation of ATP and 5-phosphoribose 1-diphosphate to form N'-(5'-phosphoribosyl)-ATP (PR-ATP). Has a crucial role in the pathway because the rate of histidine biosynthesis seems to be controlled primarily by regulation of HisG enzymatic activity. The protein is ATP phosphoribosyltransferase of Staphylococcus aureus (strain bovine RF122 / ET3-1).